The chain runs to 276 residues: Rhomboid protease GlpG (276 aa).

The next 6 helical transmembrane spans lie at 94-114 (GPVT…MQIL), 142-162 (ALMH…WYLG), 169-189 (LGSG…GYVQ), 192-212 (FSGP…GYVW), 229-249 (LIIF…GMSM), and 250-270 (ANGA…VDSL). The active-site Nucleophile is serine 201. Histidine 254 is an active-site residue.

Belongs to the peptidase S54 family.

It is found in the cell inner membrane. It catalyses the reaction Cleaves type-1 transmembrane domains using a catalytic dyad composed of serine and histidine that are contributed by different transmembrane domains.. Functionally, rhomboid-type serine protease that catalyzes intramembrane proteolysis. This is Rhomboid protease GlpG from Shigella boydii serotype 4 (strain Sb227).